The primary structure comprises 395 residues: Octopamine receptor beta-2R (395 aa).

Over 1 to 42 (MDPINGSHSGANATISDITNGAYNATDAGEWTSSVMFKLRTC) the chain is Extracellular. N-linked (GlcNAc...) asparagine glycans are attached at residues Asn-5, Asn-12, and Asn-24. Residues 43–63 (VLLLIVIMAVLGNMLVIVSVM) traverse the membrane as a helical segment. Topologically, residues 64 to 74 (RHRKLRVITNY) are cytoplasmic. Residues 75–95 (FVVSLAFADILVAMVVMPFNF) form a helical membrane-spanning segment. Residues 96 to 117 (SVQFNQGWVFGETICDLWNSSD) are Extracellular-facing. The N-linked (GlcNAc...) asparagine glycan is linked to Asn-114. Residues 118–140 (VYFTSTSILHLCCISVDRYYAIV) form a helical membrane-spanning segment. Over 141–154 (KPLKYPIKMTKKMA) the chain is Cytoplasmic. The chain crosses the membrane as a helical span at residues 155–175 (FVMLAATWLSPITISYVPIFM). Topologically, residues 176-202 (GWYTTTDFLESRRDDQCEFKVNKPYAV) are extracellular. Residues 203-223 (ISSSISFWIPCTIMIFTYLAI) form a helical membrane-spanning segment. Residues 224 to 282 (FKEANRQEKALHARAGNAMLMHRHSREVSDKNGALHINATTPTKDRNLLKMKREHKAAR) lie on the Cytoplasmic side of the membrane. Residues 283 to 303 (TLGIIMGAFILCWLPFFLYYV) traverse the membrane as a helical segment. Over 304–315 (STSLCDSCNCPE) the chain is Extracellular. The chain crosses the membrane as a helical span at residues 316-336 (VVTVIMFWTGYFNSALNPIIY). Over 337–395 (AYFNRDFRNAFKNTLACAFCSFCKRSASDLDAMERLDRRGSAQLRVPIPSRRASDLASL) the chain is Cytoplasmic.

This sequence belongs to the G-protein coupled receptor 1 family.

It is found in the cell membrane. In terms of biological role, autoreceptor for octopamine, which is a neurotransmitter, neurohormone, and neuromodulator in invertebrates. Also acts as a receptor for tyramine, but with much less potency. The activity of this receptor is mediated by G proteins which activate adenylyl cyclase. The sequence is that of Octopamine receptor beta-2R from Chilo suppressalis (Asiatic rice borer moth).